The sequence spans 258 residues: Synapse differentiation-inducing gene protein 1 (258 aa).

At 1-181 the chain is on the cytoplasmic side; it reads MDGIIEQKSM…NFLMMPPRDH (181 aa). Ser137 is subject to Phosphoserine. A helical transmembrane segment spans residues 182 to 202; it reads LGLSVFSMLCCFWPLGIAAFY. Residues 203–228 are Extracellular-facing; sequence LSHETNKAVAKGDLHQASTSSRRALF. An intramembrane region (helical) is located at residues 229–249; that stretch reads LAVLSITIGTGVYVGVAVALI. The Extracellular segment spans residues 250-258; that stretch reads AYLSKNNHL.

Belongs to the CD225/Dispanin family. In terms of assembly, homodimer. Interacts with GRIA1 and GRIA2.

Its subcellular location is the cell membrane. It is found in the early endosome membrane. It localises to the postsynaptic density membrane. The protein localises to the synapse. The protein resides in the cell projection. Its subcellular location is the dendrite. It is found in the dendritic spine. Its function is as follows. May regulate AMPA receptor content at nascent synapses, and have a role in postsynaptic development and maturation. In Homo sapiens (Human), this protein is Synapse differentiation-inducing gene protein 1 (SYNDIG1).